We begin with the raw amino-acid sequence, 701 residues long: Polyribonucleotide nucleotidyltransferase (701 aa).

Asp-485 and Asp-491 together coordinate Mg(2+). One can recognise a KH domain in the interval 552-611 (PRIIKIRINPEKIRDVIGKGGAVIRALTEETGTTIDITDDGTVMIACVNAEGGELAKKRI). The 69-residue stretch at 621–689 (GRVYDGTVLK…DKGRLRLSMK (69 aa)) folds into the S1 motif domain.

Belongs to the polyribonucleotide nucleotidyltransferase family. The cofactor is Mg(2+).

It is found in the cytoplasm. The catalysed reaction is RNA(n+1) + phosphate = RNA(n) + a ribonucleoside 5'-diphosphate. Its function is as follows. Involved in mRNA degradation. Catalyzes the phosphorolysis of single-stranded polyribonucleotides processively in the 3'- to 5'-direction. The chain is Polyribonucleotide nucleotidyltransferase from Nitrosospira multiformis (strain ATCC 25196 / NCIMB 11849 / C 71).